Here is a 376-residue protein sequence, read N- to C-terminus: Protein-tyrosine sulfotransferase 2 (376 aa).

The Cytoplasmic portion of the chain corresponds to M1–V8. The chain crosses the membrane as a helical; Signal-anchor for type II membrane protein span at residues L9–G25. Residues Q26–S376 are Lumenal-facing. R77–T81 serves as a coordination point for 3'-phosphoadenylyl sulfate. C95 and C155 are disulfide-bonded. E98 functions as the Proton donor/acceptor in the catalytic mechanism. An interaction with peptide substrate region spans residues R100–R104. Residues R182, S190, and R194 each contribute to the 3'-phosphoadenylyl sulfate site. C224 and C232 form a disulfide bridge. 3'-phosphoadenylyl sulfate-binding positions include Y237, S284–N293, and K299. N-linked (GlcNAc...) asparagine glycosylation is found at N342 and N367.

The protein belongs to the protein sulfotransferase family. As to quaternary structure, homodimer. Can also form heterodimers with TPST1. N-glycosylated. As to expression, widely expressed.

Its subcellular location is the golgi apparatus membrane. It carries out the reaction L-tyrosyl-[protein] + 3'-phosphoadenylyl sulfate = O-sulfo-L-tyrosine-[protein] + adenosine 3',5'-bisphosphate + H(+). Catalyzes the O-sulfation of tyrosine residues within acidic motifs of polypeptides, using 3'-phosphoadenylyl sulfate (PAPS) as cosubstrate. This chain is Protein-tyrosine sulfotransferase 2 (Tpst2), found in Mus musculus (Mouse).